A 200-amino-acid chain; its full sequence is NAD(P)H dehydrogenase (quinone) (200 aa).

The Flavodoxin-like domain occupies 4-191; that stretch reads ILVLYHSLWG…TIARFQGRHV (188 aa). Residues 10–15 and 79–81 contribute to the FMN site; these read SLWGHV and TRF. W12 lines the NAD(+) pocket. W99 lines the substrate pocket. FMN is bound by residues 114–120 and H135; that span reads STATQHG.

Belongs to the WrbA family. The cofactor is FMN.

It carries out the reaction a quinone + NADH + H(+) = a quinol + NAD(+). The catalysed reaction is a quinone + NADPH + H(+) = a quinol + NADP(+). The chain is NAD(P)H dehydrogenase (quinone) from Acidithiobacillus ferrooxidans (strain ATCC 53993 / BNL-5-31) (Leptospirillum ferrooxidans (ATCC 53993)).